The following is a 169-amino-acid chain: Vimentin-type intermediate filament-associated coiled-coil protein (169 aa).

A coiled-coil region spans residues 7-89 (LQIREANAHL…VHSLQATVHQ (83 aa)). A compositionally biased stretch (low complexity) spans 126–135 (RLGPLPASDP). The segment at 126–169 (RLGPLPASDPGHPPPGGPGPPLDNSTGEEADRDHLQPAVFGTTV) is disordered. Residues 136-146 (GHPPPGGPGPP) show a composition bias toward pro residues.

It is found in the cytoplasm. This Homo sapiens (Human) protein is Vimentin-type intermediate filament-associated coiled-coil protein (VMAC).